The sequence spans 427 residues: UBX domain-containing protein 2 (427 aa).

2 disordered regions span residues 115-143 (FDQSPSQIPFPSSNTEDSSEESDSSSRAS) and 273-331 (ETSG…GVAD). Positions 311–326 (STTESQGESSSQQAES) are enriched in low complexity. Residues 349-425 (PGPNVTRIQI…GIQNTALQFE (77 aa)) enclose the UBX domain. Residue serine 371 is modified to Phosphoserine.

As to quaternary structure, interacts with cdc48.

In terms of biological role, involved in CDC48-dependent protein degradation through the ubiquitin/proteasome pathway. The polypeptide is UBX domain-containing protein 2 (ubx2) (Schizosaccharomyces pombe (strain 972 / ATCC 24843) (Fission yeast)).